A 280-amino-acid chain; its full sequence is Large ribosomal subunit protein uL2 (280 aa).

Disordered stretches follow at residues 1–20, 29–58, and 225–280; these read MAIRKYKPTTPGRRASSVSM, PEKSLLRPLSKTGGRNSHGHITTRHRGGGH, and VMNP…NKKR. Basic residues predominate over residues 45–58; that stretch reads SHGHITTRHRGGGH. Residues 253–269 are compositionally biased toward basic and acidic residues; sequence KEGRTRRPKRYSDDMIV. The span at 270 to 280 shows a compositional bias: basic residues; that stretch reads RRRRANKNKKR.

Belongs to the universal ribosomal protein uL2 family. In terms of assembly, part of the 50S ribosomal subunit. Forms a bridge to the 30S subunit in the 70S ribosome.

In terms of biological role, one of the primary rRNA binding proteins. Required for association of the 30S and 50S subunits to form the 70S ribosome, for tRNA binding and peptide bond formation. It has been suggested to have peptidyltransferase activity; this is somewhat controversial. Makes several contacts with the 16S rRNA in the 70S ribosome. In Corynebacterium efficiens (strain DSM 44549 / YS-314 / AJ 12310 / JCM 11189 / NBRC 100395), this protein is Large ribosomal subunit protein uL2.